The following is a 172-amino-acid chain: C-phycocyanin beta chain (172 aa).

Asn-72 bears the N4-methylasparagine mark. (2R,3E)-phycocyanobilin is bound by residues Cys-82 and Cys-153.

Belongs to the phycobiliprotein family. As to quaternary structure, heterodimer of an alpha and a beta subunit, which further assembles into trimers and the trimers into hexamers. The basic functional unit of phycobiliproteins is a ring-shaped hexamer formed from two back-to-back trimers contacting via the alpha chain subunits. The trimers are composed of alpha/beta subunit heterodimers arranged around a three-fold axis of symmetry. The phycoerythrins also contain a gamma subunit which is located in the center of the hexamer. In terms of processing, contains two covalently linked bilin chromophores.

Its subcellular location is the plastid. It localises to the chloroplast thylakoid membrane. Light-harvesting photosynthetic bile pigment-protein from the phycobiliprotein complex (phycobilisome, PBS). Phycocyanin is the major phycobiliprotein in the PBS rod. This Rhodella violacea (Red alga) protein is C-phycocyanin beta chain (cpcB).